We begin with the raw amino-acid sequence, 723 residues long: Threonine--tRNA ligase 1, cytoplasmic (723 aa).

Residues 1-46 (MFEEKASSPSGKMGGEEKPIGAGEEKQKEGGKKKNKEGSGDGGRAE) are disordered. Positions 14 to 39 (GGEEKPIGAGEEKQKEGGKKKNKEGS) are enriched in basic and acidic residues. A Phosphoserine modification is found at serine 39. The TGS domain maps to 79 to 143 (DSKPIKVTLP…EEDCTLELLK (65 aa)). Lysine 243 carries the N6-acetyllysine modification. At threonine 246 the chain carries Phosphothreonine. Phosphotyrosine is present on tyrosine 298. The residue at position 453 (threonine 453) is a Phosphothreonine. At serine 702 the chain carries Phosphoserine.

It belongs to the class-II aminoacyl-tRNA synthetase family. As to quaternary structure, homodimer. In terms of processing, ISGylated.

It is found in the cytoplasm. The enzyme catalyses tRNA(Thr) + L-threonine + ATP = L-threonyl-tRNA(Thr) + AMP + diphosphate + H(+). With respect to regulation, inhibited by borrelidin (BN, IC 50 is 7 nM), which binds to 4 distinct subsites in the protein, preventing binding of all 3 substrates. In terms of biological role, catalyzes the attachment of threonine to tRNA(Thr) in a two-step reaction: threonine is first activated by ATP to form Thr-AMP and then transferred to the acceptor end of tRNA(Thr). Also edits incorrectly charged tRNA(Thr) via its editing domain, at the post-transfer stage. This is Threonine--tRNA ligase 1, cytoplasmic from Homo sapiens (Human).